The following is a 213-amino-acid chain: ATP synthase subunit delta 2 (213 aa).

This sequence belongs to the ATPase delta chain family. F-type ATPases have 2 components, F(1) - the catalytic core - and F(0) - the membrane proton channel. F(1) has five subunits: alpha(3), beta(3), gamma(1), delta(1), epsilon(1). F(0) has three main subunits: a(1), b(2) and c(10-14). The alpha and beta chains form an alternating ring which encloses part of the gamma chain. F(1) is attached to F(0) by a central stalk formed by the gamma and epsilon chains, while a peripheral stalk is formed by the delta and b chains.

It is found in the cell inner membrane. Its function is as follows. F(1)F(0) ATP synthase produces ATP from ADP in the presence of a proton or sodium gradient. F-type ATPases consist of two structural domains, F(1) containing the extramembraneous catalytic core and F(0) containing the membrane proton channel, linked together by a central stalk and a peripheral stalk. During catalysis, ATP synthesis in the catalytic domain of F(1) is coupled via a rotary mechanism of the central stalk subunits to proton translocation. In terms of biological role, this protein is part of the stalk that links CF(0) to CF(1). It either transmits conformational changes from CF(0) to CF(1) or is implicated in proton conduction. In Brachyspira hyodysenteriae (strain ATCC 49526 / WA1), this protein is ATP synthase subunit delta 2.